Consider the following 277-residue polypeptide: MVVKIGIIKCGNIGMSPLIDLALDERADRTNIDVISIGSGAKMGPNQVVEVTTKMVEDIKPDFIIYVGPNPAAPGPAKAREILSASDIPSVIIGDAPGIKAKDKMAEEGLGYILIKCDPMIGARRQFLDPVEMAMFNADVIRVLAGTGAARVVQNAIDDIVEAIEAGNEIELPKIVVTDAKSVAAAEFSNPYAKAKAMAAFAMAEQVANIDVKGCFMTKEMEKYIPIVASAHEMIRTAAKLVDEARELEKATDSVSRKPHGADGKRLNKTKLMEKPE.

Positions 249–277 (EKATDSVSRKPHGADGKRLNKTKLMEKPE) are disordered.

Belongs to the MTD family.

The enzyme catalyses 5,10-methylenetetrahydromethanopterin + oxidized coenzyme F420-(gamma-L-Glu)(n) + 2 H(+) = 5,10-methenyl-5,6,7,8-tetrahydromethanopterin + reduced coenzyme F420-(gamma-L-Glu)(n). It participates in one-carbon metabolism; methanogenesis from CO(2); 5,10-methylene-5,6,7,8-tetrahydromethanopterin from 5,10-methenyl-5,6,7,8-tetrahydromethanopterin (coenzyme F420 route): step 1/1. Its function is as follows. Catalyzes the reversible reduction of methenyl-H(4)MPT(+) to methylene-H(4)MPT. The polypeptide is F420-dependent methylenetetrahydromethanopterin dehydrogenase (Methanococcus aeolicus (strain ATCC BAA-1280 / DSM 17508 / OCM 812 / Nankai-3)).